Reading from the N-terminus, the 363-residue chain is F-box protein At3g44326 (363 aa).

The tract at residues 1-23 is disordered; the sequence is MLSSSSSSTVEQPSRGGSPGINA. Positions 27–66 constitute an F-box domain; that stretch reads DVLRSNILTRLDGSSLAALSCTCSNLNSFCSDESLWRQQC.

This Arabidopsis thaliana (Mouse-ear cress) protein is F-box protein At3g44326.